The following is a 327-amino-acid chain: Selenate reductase subunit beta (327 aa).

3 consecutive 4Fe-4S ferredoxin-type domains span residues 6-35, 124-155, and 157-186; these read LAYV…RDGR, NHYF…KREE, and GLVV…FNLQ. Positions 15, 18, 21, 25, 133, 136, and 141 each coordinate [4Fe-4S] cluster. Positions 145, 166, and 172 each coordinate [3Fe-4S] cluster. Positions 176, 193, 196, 208, and 212 each coordinate [4Fe-4S] cluster.

Heterotrimer of alpha (SerA), beta (SerB) and gamma (SerC) subunits. [3Fe-4S] cluster is required as a cofactor. The cofactor is [4Fe-4S] cluster.

The protein resides in the periplasm. It carries out the reaction selenite + 2 Fe(III)-[cytochrome c] + H2O = 2 Fe(II)-[cytochrome] + selenate + 2 H(+). With respect to regulation, enzyme isolated from cells grown in a tungstate rich environment shows a 20-fold reduction in selenate reductase activity. Its function is as follows. Component of the selenate reductase, which catalyzes the reduction of selenate to selenite and allows anaerobic growth with selenate as the sole terminal electron acceptor. A c-type di-heme cytochrome of the cytc4 family was shown to donate electrons to the selenate reductase in vitro. SerABC can also use reduced benzyl viologen or reduced methyl viologen as an electron donor. This subunit transfers electrons from SerC to SerA. The reductase is specific for selenate, and cannot reduce nitrate, nitrite, chlorate or sulfate. In Thauera selenatis, this protein is Selenate reductase subunit beta.